The following is a 481-amino-acid chain: Cysteine--tRNA ligase (481 aa).

Residue Cys-29 coordinates Zn(2+). The 'HIGH' region motif lies at 31–41 (VTVYDYCHIGH). Zn(2+)-binding residues include Cys-209, His-234, and Glu-238. A 'KMSKS' region motif is present at residues 266-270 (KMSKS). Residue Lys-269 participates in ATP binding.

This sequence belongs to the class-I aminoacyl-tRNA synthetase family. As to quaternary structure, monomer. Zn(2+) serves as cofactor.

The protein resides in the cytoplasm. It carries out the reaction tRNA(Cys) + L-cysteine + ATP = L-cysteinyl-tRNA(Cys) + AMP + diphosphate. This chain is Cysteine--tRNA ligase, found in Syntrophotalea carbinolica (strain DSM 2380 / NBRC 103641 / GraBd1) (Pelobacter carbinolicus).